A 691-amino-acid polypeptide reads, in one-letter code: Protein simr-1 (691 aa).

The Tudor; degenerate domain occupies 139–204 (EAEITPGTIY…TLFHLGKFTI (66 aa)). Disordered stretches follow at residues 547 to 573 (TGPCGSNTSRPTAQNTANSSINQDMSI) and 588 to 618 (DNLNDTENWPNSEREQSATEMESGAEATTNS). 2 stretches are compositionally biased toward polar residues: residues 549–573 (PCGSNTSRPTAQNTANSSINQDMSI) and 588–598 (DNLNDTENWPN).

It is found in the cytoplasm. The protein localises to the perinuclear region. Functionally, acts downstream of piRNA production to promote mediator complex-dependent endogenous siRNA biogenesis from piRNA-target mRNAs in the RNA interference pathway in germ cells. Not required to identify target mRNA by the piRNA pathway. Plays a role in both spermatogenesis and oogenesis and in maintaining fertility over multiple generations, probably by directing mutator-dependent silencing to piRNA-targeted genes. This Caenorhabditis elegans protein is Protein simr-1.